We begin with the raw amino-acid sequence, 185 residues long: MVDKKVDKKPVPEDWPHIVGDYVVGDAESPVAVVTLGSHMEDEPVRAGAAISGPLHTENLGIEKVVGNVIANPNLRFLLVCGAEVMGHITGQTMKALHSNGVDGETGRIIGATGAIPYIENMPDEAIERFRRQVELVDMVDVEDPAAIRERIGECVVHDSGAIDEEPLILRPSEDLNKNKPDENT.

Residues Met1 to Asp21 are Cytoplasmic-facing. Residues Tyr22–Ser38 form a helical membrane-spanning segment. The Extracellular segment spans residues His39 to Thr185. His88 lines the 5-hydroxybenzimidazolylcob(I)amide pocket.

This sequence belongs to the MtrA family. The complex is composed of 8 subunits; MtrA, MtrB, MtrC, MtrD, MtrE, MtrF, MtrG and MtrH. It depends on 5-hydroxybenzimidazolylcob(I)amide as a cofactor.

It is found in the cell membrane. The enzyme catalyses 5-methyl-5,6,7,8-tetrahydromethanopterin + coenzyme M + 2 Na(+)(in) = 5,6,7,8-tetrahydromethanopterin + methyl-coenzyme M + 2 Na(+)(out). The protein operates within one-carbon metabolism; methanogenesis from CO(2); methyl-coenzyme M from 5,10-methylene-5,6,7,8-tetrahydromethanopterin: step 2/2. Functionally, part of a complex that catalyzes the formation of methyl-coenzyme M and tetrahydromethanopterin from coenzyme M and methyl-tetrahydromethanopterin. This is an energy-conserving, sodium-ion translocating step. The polypeptide is Tetrahydromethanopterin S-methyltransferase subunit A 2 (Methanothermobacter marburgensis (strain ATCC BAA-927 / DSM 2133 / JCM 14651 / NBRC 100331 / OCM 82 / Marburg) (Methanobacterium thermoautotrophicum)).